Reading from the N-terminus, the 83-residue chain is MAVKERVGTVVSDKMEKTVVVAVENRFPHPIYKKTVSRTTRYKVHDEDNRCQVGDRVRITETRPLSRSKRWAVAEIMTTKSGS.

This sequence belongs to the universal ribosomal protein uS17 family. In terms of assembly, part of the 30S ribosomal subunit.

One of the primary rRNA binding proteins, it binds specifically to the 5'-end of 16S ribosomal RNA. This Synechococcus sp. (strain RCC307) protein is Small ribosomal subunit protein uS17.